Reading from the N-terminus, the 284-residue chain is L-ribulose-5-phosphate 3-epimerase UlaE (284 aa).

Belongs to the L-ribulose-5-phosphate 3-epimerase family.

It catalyses the reaction L-ribulose 5-phosphate = L-xylulose 5-phosphate. It participates in cofactor degradation; L-ascorbate degradation; D-xylulose 5-phosphate from L-ascorbate: step 3/4. In terms of biological role, catalyzes the isomerization of L-xylulose-5-phosphate to L-ribulose-5-phosphate. Is involved in the anaerobic L-ascorbate utilization. This is L-ribulose-5-phosphate 3-epimerase UlaE from Shigella sonnei (strain Ss046).